A 263-amino-acid chain; its full sequence is Elongin-A (263 aa).

Disordered regions lie at residues 112–147 (KLEQ…YCPK) and 170–263 (SATS…PKRI). Polar residues-rich tracts occupy residues 186–206 (RSSS…NTYP) and 214–229 (SFTS…VKTQ). The segment covering 230–245 (PSSSSSPSISRPTSFP) has biased composition (low complexity). Over residues 253 to 263 (SRFSSQVPKRI) the composition is skewed to polar residues.

It belongs to the ELA1 family. As to quaternary structure, heterodimer with elc1. Component of a CRL3 E3 ubiquitin ligase complex consisting of a cullin, the linker protein elc1, the substrate receptor pof4/ela1, and the RING protein rbx1. Interacts with skp1.

Functionally, as part of the CRL3 E3 ubiquitin ligase complex; polyubiquitylates monoubiquitylated RNA polymerase II subunit rpb1 to trigger its proteolysis; plays a role in global genomic repair. This chain is Elongin-A (pof4), found in Schizosaccharomyces pombe (strain 972 / ATCC 24843) (Fission yeast).